Consider the following 164-residue polypeptide: SsrA-binding protein (164 aa).

It belongs to the SmpB family.

The protein localises to the cytoplasm. Required for rescue of stalled ribosomes mediated by trans-translation. Binds to transfer-messenger RNA (tmRNA), required for stable association of tmRNA with ribosomes. tmRNA and SmpB together mimic tRNA shape, replacing the anticodon stem-loop with SmpB. tmRNA is encoded by the ssrA gene; the 2 termini fold to resemble tRNA(Ala) and it encodes a 'tag peptide', a short internal open reading frame. During trans-translation Ala-aminoacylated tmRNA acts like a tRNA, entering the A-site of stalled ribosomes, displacing the stalled mRNA. The ribosome then switches to translate the ORF on the tmRNA; the nascent peptide is terminated with the 'tag peptide' encoded by the tmRNA and targeted for degradation. The ribosome is freed to recommence translation, which seems to be the essential function of trans-translation. The chain is SsrA-binding protein from Shewanella sediminis (strain HAW-EB3).